Consider the following 568-residue polypeptide: Kelch-like protein 12 (568 aa).

A BTB domain is found at 33–100 (CDVTLRVEQK…VYTETVHVTV (68 aa)). In terms of domain architecture, BACK spans 135 to 236 (CLGIRDFAET…LTPRYITDVI (102 aa)). Kelch repeat units lie at residues 282–329 (VLLV…SLHD), 331–379 (IYVI…TLGD), 380–426 (MIYV…VASG), 427–473 (VIYC…LLND), 475–520 (IYVV…VLRG), and 522–567 (LYAI…VLRE). The segment at 405–568 (QWSMLGDMQT…DAGVCVLREK (164 aa)) is interaction with DVL3.

In terms of assembly, component of the BCR(KLHL12) E3 ubiquitin ligase complex, at least composed of CUL3 and KLHL12 and RBX1. This complex interacts with DVL3 upon activation of the Wnt signaling pathway by WNT3A. Interacts with DRD4, KLHL2 and SEC31A. Interacts with PEF1 and PDCD6/ALG-2; interaction takes place in response to cytosolic calcium increase and leads to bridge together the BCR(KLHL12) complex and SEC31 (SEC31A or SEC31B). Post-translationally, ubiquitinated by the SCF(FBXL17) complex, leading to its degradation by the proteasome: ubiquitination by the SCF(FBXL17) complex takes place when aberrant BTB domain dimers are formed. In terms of tissue distribution, ubiquitously expressed. Highly expressed in testis and at lower levels in the submandibular salivary gland.

Its subcellular location is the cytoplasmic vesicle. The protein resides in the COPII-coated vesicle. It participates in protein modification; protein ubiquitination. Functionally, substrate-specific adapter of a BCR (BTB-CUL3-RBX1) E3 ubiquitin ligase complex that acts as a negative regulator of Wnt signaling pathway and ER-Golgi transport. The BCR(KLHL12) complex is involved in ER-Golgi transport by regulating the size of COPII coats, thereby playing a key role in collagen export, which is required for embryonic stem (ES) cells division: BCR(KLHL12) acts by mediating monoubiquitination of SEC31 (SEC31A or SEC31B). The BCR(KLHL12) complex is also involved in neural crest specification: in response to cytosolic calcium increase, interacts with the heterodimer formed with PEF1 and PDCD6/ALG-2, leading to bridge together the BCR(KLHL12) complex and SEC31 (SEC31A or SEC31B), promoting monoubiquitination of SEC31 and subsequent collagen export. As part of the BCR(KLHL12) complex, also acts as a negative regulator of the Wnt signaling pathway by mediating ubiquitination and subsequent proteolysis of DVL3. The BCR(KLHL12) complex also mediates polyubiquitination of DRD4 and PEF1, without leading to degradation of these proteins. The chain is Kelch-like protein 12 (KLHL12) from Homo sapiens (Human).